An 874-amino-acid chain; its full sequence is Probable inorganic carbon transporter subunit DabA (874 aa).

Zn(2+) is bound by residues cysteine 398, aspartate 400, histidine 580, and cysteine 595.

It belongs to the inorganic carbon transporter (TC 9.A.2) DabA family. As to quaternary structure, forms a complex with DabB. Zn(2+) is required as a cofactor.

It localises to the cell membrane. Functionally, part of an energy-coupled inorganic carbon pump. The polypeptide is Probable inorganic carbon transporter subunit DabA (Bacillus cereus (strain ZK / E33L)).